Here is a 325-residue protein sequence, read N- to C-terminus: NADH-quinone oxidoreductase subunit H (325 aa).

A run of 8 helical transmembrane segments spans residues 11-31 (ILLS…CGAF), 81-101 (VIFT…FAIV), 114-134 (IGIL…LFAG), 154-174 (LSYE…AGSF), 186-206 (IWNV…GVAV), 237-257 (FFVG…TLFF), 265-285 (LPPF…FILI), and 304-324 (VCLP…LWQA).

The protein belongs to the complex I subunit 1 family. NDH-1 is composed of 13 different subunits. Subunits NuoA, H, J, K, L, M, N constitute the membrane sector of the complex.

The protein resides in the cell inner membrane. It catalyses the reaction a quinone + NADH + 5 H(+)(in) = a quinol + NAD(+) + 4 H(+)(out). Functionally, NDH-1 shuttles electrons from NADH, via FMN and iron-sulfur (Fe-S) centers, to quinones in the respiratory chain. The immediate electron acceptor for the enzyme in this species is believed to be ubiquinone. Couples the redox reaction to proton translocation (for every two electrons transferred, four hydrogen ions are translocated across the cytoplasmic membrane), and thus conserves the redox energy in a proton gradient. This subunit may bind ubiquinone. The polypeptide is NADH-quinone oxidoreductase subunit H (Enterobacter sp. (strain 638)).